We begin with the raw amino-acid sequence, 273 residues long: 1,4-dihydroxy-2-naphthoyl-CoA synthase (273 aa).

Residues Arg-34, 73–77 (SGGDQ), Tyr-85, 117–121 (YAVGG), Thr-143, Ser-149, Tyr-246, and Lys-261 each bind substrate. Hydrogencarbonate is bound at residue 142–144 (QTG). Residues 254 to 265 (GRDAFKEKRDPD) show a composition bias toward basic and acidic residues. The segment at 254 to 273 (GRDAFKEKRDPDFDQFPKFP) is disordered.

It belongs to the enoyl-CoA hydratase/isomerase family. MenB subfamily. Requires hydrogencarbonate as cofactor.

It carries out the reaction 2-succinylbenzoyl-CoA + H(+) = 1,4-dihydroxy-2-naphthoyl-CoA + H2O. It functions in the pathway quinol/quinone metabolism; 1,4-dihydroxy-2-naphthoate biosynthesis; 1,4-dihydroxy-2-naphthoate from chorismate: step 6/7. Its pathway is quinol/quinone metabolism; menaquinone biosynthesis. In terms of biological role, converts o-succinylbenzoyl-CoA (OSB-CoA) to 1,4-dihydroxy-2-naphthoyl-CoA (DHNA-CoA). The chain is 1,4-dihydroxy-2-naphthoyl-CoA synthase from Staphylococcus aureus (strain Mu50 / ATCC 700699).